The following is a 323-amino-acid chain: Olfactory receptor 52B2 (323 aa).

The Extracellular segment spans residues M1 to I27. N5 carries N-linked (GlcNAc...) asparagine glycosylation. The chain crosses the membrane as a helical span at residues W28 to I48. Residues V49 to N56 lie on the Cytoplasmic side of the membrane. Residues L57–T77 traverse the membrane as a helical segment. Residues T78–T101 are Extracellular-facing. Cysteines 99 and 191 form a disulfide. A helical transmembrane segment spans residues Q102–F122. Topologically, residues D123 to P141 are cytoplasmic. A helical transmembrane segment spans residues V142–I162. The Extracellular portion of the chain corresponds to F163 to I198. Residues W199–S219 form a helical membrane-spanning segment. Residues Y220–A239 lie on the Cytoplasmic side of the membrane. The helical transmembrane segment at L240–T260 threads the bilayer. Residues L261–H275 are Extracellular-facing. Residues I276–V296 traverse the membrane as a helical segment. The Cytoplasmic segment spans residues K297 to S323.

This sequence belongs to the G-protein coupled receptor 1 family.

The protein localises to the cell membrane. Its function is as follows. Odorant receptor. In Homo sapiens (Human), this protein is Olfactory receptor 52B2 (OR52B2).